A 427-amino-acid polypeptide reads, in one-letter code: Proteinase-activated receptor 1 (427 aa).

The signal sequence occupies residues 1–21 (MGPRWLLLWAAGLGLCSPLVS). A propeptide spans 22–41 (ARTRGPRPGTDPTNGTLGPR) (removed for receptor activation). The segment at 23–87 (RTRGPRPGTD…RSSPPQKSPP (65 aa)) is disordered. Asn35 is a glycosylation site (N-linked (GlcNAc...) asparagine). Topologically, residues 42 to 104 (SFFLRNSNDG…SGYLTSAWLT (63 aa)) are extracellular. Over residues 58–68 (PEDEDSSEGEF) the composition is skewed to acidic residues. Asn77 carries N-linked (GlcNAc...) asparagine glycosylation. A helical transmembrane segment spans residues 105–130 (VFIPSVYTGVFLVSLPLNIMAVVVFV). Topologically, residues 131-139 (LKMKVKKPA) are cytoplasmic. The chain crosses the membrane as a helical span at residues 140–159 (VVYMLHLAAADVLFVCVLPF). The Extracellular portion of the chain corresponds to 160-178 (KISYYFSGSDWRFGSAMCR). An intrachain disulfide couples Cys177 to Cys256. A helical membrane pass occupies residues 179 to 200 (FVTAAFYGNMYASIMLMTAISV). Topologically, residues 201–220 (DRFLAVVYPIQSLSWRTLGR) are cytoplasmic. Residues 221–241 (ASFICLAIWAMAIAGVAPLLL) form a helical membrane-spanning segment. The Extracellular segment spans residues 242 to 270 (QEQATQVPGLNITACHDVLNQTLLEGYYS). Residues Asn252 and Asn261 are each glycosylated (N-linked (GlcNAc...) asparagine). A helical membrane pass occupies residues 271-290 (YYFSAFSAVFFFVPLTLSTV). The Cytoplasmic segment spans residues 291 to 313 (SYVSIIRCLSSSTVANQNKKSRA). Residues 314–336 (LLLSAAVFCIFILCFGPTNILLL) traverse the membrane as a helical segment. At 337–351 (LHYAFLSSDPMTEAA) the chain is on the extracellular side. The chain crosses the membrane as a helical span at residues 352-376 (YFAYLLCVCVSSISCCIDPLIYYYA). Topologically, residues 377–427 (SSECQRHLFAILHCKESSDPGSCNSSGQLMPSKMDTCSSNLSSSLYKKLLT) are cytoplasmic. Ser420 bears the Phosphoserine mark.

It belongs to the G-protein coupled receptor 1 family. Post-translationally, proteolytic cleavage by thrombin generates a new N-terminus that functions as a tethered ligand. Also proteolytically cleaved by cathepsin CTSG. In terms of processing, phosphorylated in the C-terminal tail; probably mediating desensitization prior to the uncoupling and internalization of the receptor.

It localises to the cell membrane. Its function is as follows. High affinity receptor that binds the activated thrombin, leading to calcium release from intracellular stores. The thrombin-activated receptor signaling pathway is mediated through PTX-insensitive G proteins, activation of phospholipase C resulting in the production of 1D-myo-inositol 1,4,5-trisphosphate (InsP3) which binds to InsP3 receptors causing calcium release from the stores. In astrocytes, the calcium released into the cytosol allows the Ca(2+)-dependent release of L-glutamate into the synaptic cleft through BEST1, that targets the neuronal postsynaptic GRIN2A/NMDAR receptor resulting in the synaptic plasticity regulation. May play a role in platelets activation and in vascular development. Mediates up-regulation of pro-inflammatory cytokines, such as MCP-1/CCL2 and IL6, triggered by coagulation factor Xa (F10) in cardiac fibroblasts and umbilical vein endothelial cells. The chain is Proteinase-activated receptor 1 from Bos taurus (Bovine).